We begin with the raw amino-acid sequence, 354 residues long: Fusarinine C esterase sidJ (354 aa).

It belongs to the sidJ hydrolase family. As to quaternary structure, homodimer.

The catalysed reaction is fusarinine C + 3 H2O = 3 fusarinine + Fe(3+). Displays specific fusarinine C (FsC) esterase activity but does not hydrolyze triacetylfusarinine C (TAFC), which has the same core structure as fusarinine C. Both extra- and intracellular siderophores have been shown to be crucial for the virulence. Subsequent to chelation of iron and uptake, FsC and TAFC are hydrolyzed and the iron is transferred to the metabolism or to the intracellular siderophore ferricrocin (FC) for transport and storage of iron. The sequence is that of Fusarinine C esterase sidJ from Aspergillus fumigatus (strain ATCC MYA-4609 / CBS 101355 / FGSC A1100 / Af293) (Neosartorya fumigata).